A 570-amino-acid polypeptide reads, in one-letter code: Hydroxylamine reductase (570 aa).

[4Fe-4S] cluster is bound by residues cysteine 5, cysteine 8, cysteine 17, and cysteine 23. Residues histidine 266, glutamate 290, cysteine 334, cysteine 425, cysteine 453, cysteine 478, glutamate 513, and lysine 515 each coordinate hybrid [4Fe-2O-2S] cluster. Residue cysteine 425 is modified to Cysteine persulfide.

Belongs to the HCP family. It depends on [4Fe-4S] cluster as a cofactor. The cofactor is hybrid [4Fe-2O-2S] cluster.

Its subcellular location is the cytoplasm. It carries out the reaction A + NH4(+) + H2O = hydroxylamine + AH2 + H(+). In terms of biological role, catalyzes the reduction of hydroxylamine to form NH(3) and H(2)O. The polypeptide is Hydroxylamine reductase (Clostridium botulinum (strain Okra / Type B1)).